The following is a 247-amino-acid chain: MAQQGSGYQARYKRILLKLSGEALMGSEEFGIDPKVLDRMALEVGQLVGIGVQVGLVIGGGNLFRGAALSAAGMDRVTGDHMGMLATVMNALAMRDALERANITAIVMSAISMLGVTDHYDRRKAMRHLSAKEVVIFAAGTGNPFFTTDSAACLRAIEIDADVVLKATKVDGVYTADPFKDPNAEKFDHLTYDEVLDRKLGVMDLTAICLCRDHKMPLRVFNMNKPGALLNIVHGGAEGTLIEEAQQ.

18–21 (KLSG) is an ATP binding site. Residue Gly60 participates in UMP binding. ATP-binding residues include Gly61 and Arg65. UMP-binding positions include Asp80 and 141–148 (TGNPFFTT). Thr168, Tyr174, and Asp177 together coordinate ATP.

This sequence belongs to the UMP kinase family. In terms of assembly, homohexamer.

It is found in the cytoplasm. It carries out the reaction UMP + ATP = UDP + ADP. Its pathway is pyrimidine metabolism; CTP biosynthesis via de novo pathway; UDP from UMP (UMPK route): step 1/1. With respect to regulation, inhibited by UTP. In terms of biological role, catalyzes the reversible phosphorylation of UMP to UDP. The protein is Uridylate kinase of Pseudomonas savastanoi pv. phaseolicola (strain 1448A / Race 6) (Pseudomonas syringae pv. phaseolicola (strain 1448A / Race 6)).